The chain runs to 200 residues: MTETDQTPDTAPEAAPEVAPIVSDDLAPLRAKTIVLVGLMGVGKSSVGRRLANVLGLPFRDADNEVEAAAGRSISEIFAELGEPAFRDGERRVIARLLDEPPHVLATGGGAFVNAETRALINEKAVSVWLKADVELLARRVSRKDNRPLVRGKDPVKVLTELAEARYPAYAEAQVHVETGDTPHMVAVEAILTALRQAHA.

Position 41–46 (41–46 (GVGKSS)) interacts with ATP. Ser-45 contributes to the Mg(2+) binding site. The substrate site is built by Asp-63, Arg-87, and Gly-109. Arg-147 contacts ATP. Substrate is bound at residue Arg-166.

It belongs to the shikimate kinase family. As to quaternary structure, monomer. Mg(2+) is required as a cofactor.

The protein resides in the cytoplasm. The catalysed reaction is shikimate + ATP = 3-phosphoshikimate + ADP + H(+). Its pathway is metabolic intermediate biosynthesis; chorismate biosynthesis; chorismate from D-erythrose 4-phosphate and phosphoenolpyruvate: step 5/7. Functionally, catalyzes the specific phosphorylation of the 3-hydroxyl group of shikimic acid using ATP as a cosubstrate. The sequence is that of Shikimate kinase from Caulobacter vibrioides (strain NA1000 / CB15N) (Caulobacter crescentus).